The primary structure comprises 189 residues: MARPCAFLMVLVVLSYWSACSLGCDLPQTHNLRNKRALTLLEQMRRLSPLSCLKDRKDFGFPQEKVDAQQIKKAQAIPFVHELTQQILTLFTSNDSSAAWNATLLDSFCNDLHQQLNDLKACLMQQVGVQEFPLTQEDSLLAVRKYFHSITVYLREKKHSPCAWEVVRAEVQRTLSSSANLLARLSKEE.

The signal sequence occupies residues 1-23 (MARPCAFLMVLVVLSYWSACSLG). Disulfide bonds link Cys-24–Cys-122 and Cys-52–Cys-162. N-linked (GlcNAc...) asparagine glycans are attached at residues Asn-94 and Asn-101.

It belongs to the alpha/beta interferon family.

It is found in the secreted. Functionally, exhibits antiviral activity against Theiler's virus, Mengo virus and vesicular stomatitis virus. Interferons alpha stimulate the production of two enzymes: a protein kinase and an oligoadenylate synthetase. This is Interferon alpha-13 (Ifna13) from Mus musculus (Mouse).